We begin with the raw amino-acid sequence, 263 residues long: Endonuclease 8 (263 aa).

Proline 2 functions as the Schiff-base intermediate with DNA in the catalytic mechanism. Catalysis depends on glutamate 3, which acts as the Proton donor. Lysine 53 acts as the Proton donor; for beta-elimination activity in catalysis. The DNA site is built by glutamine 70, arginine 125, and asparagine 169. The FPG-type zinc-finger motif lies at 229–263; that stretch reads KVFHREGKACERCGGVIERSTLSSRPFYGCPVCQK. The Proton donor; for delta-elimination activity role is filled by arginine 253.

The protein belongs to the FPG family. The cofactor is Zn(2+).

It carries out the reaction 2'-deoxyribonucleotide-(2'-deoxyribose 5'-phosphate)-2'-deoxyribonucleotide-DNA = a 3'-end 2'-deoxyribonucleotide-(2,3-dehydro-2,3-deoxyribose 5'-phosphate)-DNA + a 5'-end 5'-phospho-2'-deoxyribonucleoside-DNA + H(+). Functionally, involved in base excision repair of DNA damaged by oxidation or by mutagenic agents. Acts as a DNA glycosylase that recognizes and removes damaged bases. Has a preference for oxidized pyrimidines, such as thymine glycol, 5,6-dihydrouracil and 5,6-dihydrothymine. Has AP (apurinic/apyrimidinic) lyase activity and introduces nicks in the DNA strand. Cleaves the DNA backbone by beta-delta elimination to generate a single-strand break at the site of the removed base with both 3'- and 5'-phosphates. This Enterobacter sp. (strain 638) protein is Endonuclease 8.